The chain runs to 612 residues: Dihydroxy-acid dehydratase (612 aa).

Asp81 serves as a coordination point for Mg(2+). Residue Cys122 coordinates [2Fe-2S] cluster. Mg(2+) contacts are provided by Asp123 and Lys124. Lys124 carries the N6-carboxylysine modification. Cys195 provides a ligand contact to [2Fe-2S] cluster. Position 491 (Glu491) interacts with Mg(2+). The active-site Proton acceptor is Ser517.

The protein belongs to the IlvD/Edd family. As to quaternary structure, homodimer. [2Fe-2S] cluster serves as cofactor. It depends on Mg(2+) as a cofactor.

The enzyme catalyses (2R)-2,3-dihydroxy-3-methylbutanoate = 3-methyl-2-oxobutanoate + H2O. It catalyses the reaction (2R,3R)-2,3-dihydroxy-3-methylpentanoate = (S)-3-methyl-2-oxopentanoate + H2O. It functions in the pathway amino-acid biosynthesis; L-isoleucine biosynthesis; L-isoleucine from 2-oxobutanoate: step 3/4. The protein operates within amino-acid biosynthesis; L-valine biosynthesis; L-valine from pyruvate: step 3/4. Functionally, functions in the biosynthesis of branched-chain amino acids. Catalyzes the dehydration of (2R,3R)-2,3-dihydroxy-3-methylpentanoate (2,3-dihydroxy-3-methylvalerate) into 2-oxo-3-methylpentanoate (2-oxo-3-methylvalerate) and of (2R)-2,3-dihydroxy-3-methylbutanoate (2,3-dihydroxyisovalerate) into 2-oxo-3-methylbutanoate (2-oxoisovalerate), the penultimate precursor to L-isoleucine and L-valine, respectively. In Rhizobium leguminosarum bv. trifolii (strain WSM2304), this protein is Dihydroxy-acid dehydratase.